The chain runs to 1327 residues: Kinectin (1327 aa).

The Cytoplasmic portion of the chain corresponds to 1–8 (MELYESTY). The chain crosses the membrane as a helical; Signal-anchor for type II membrane protein span at residues 9–29 (FIVLIPSVVITVIFLFFWLFM). At 30–1327 (KETLYDEVLA…EVNQQLTKET (1298 aa)) the chain is on the lumenal side. Disordered stretches follow at residues 49 to 181 (STKT…EQDK) and 197 to 216 (LSHQ…GLSK). N-linked (GlcNAc...) asparagine glycosylation is present at Asn69. 2 stretches are compositionally biased toward basic and acidic residues: residues 73 to 86 (RESD…DFKL) and 111 to 135 (VRER…ESDA). A phosphoserine mark is found at Ser75 and Ser77. Over residues 163-173 (LKKKAGQKKSK) the composition is skewed to basic residues. The stretch at 329 to 1327 (ELSGLLHQLQ…EVNQQLTKET (999 aa)) forms a coiled coil. Asn1031 carries N-linked (GlcNAc...) asparagine glycosylation. Ser1060 carries the phosphoserine modification. Residue Asn1066 is glycosylated (N-linked (GlcNAc...) asparagine). Phosphoserine is present on Ser1290.

This sequence belongs to the kinectin family. Expressed in all tissues examined including 12-day embryo, adult heart, brain, ovary, kidney, lung, small intestine, spleen, thymus and pancreas.

The protein resides in the endoplasmic reticulum membrane. Receptor for kinesin thus involved in kinesin-driven vesicle motility. Accumulates in integrin-based adhesion complexes (IAC) upon integrin aggregation by fibronectin. This is Kinectin from Mus musculus (Mouse).